The chain runs to 357 residues: Tribbles homolog 3 (357 aa).

Residues 1 to 63 (MRASPLAVPA…PAPVHAPDVT (63 aa)) form a disordered region. Positions 1–127 (MRASPLAVPA…GHVARPAEVL (127 aa)) are interaction with DDIT3/CHOP. A Protein kinase domain is found at 68–316 (LGPYVLLEPE…SGILLHPWLR (249 aa)). The interval 333–357 (DQVVPEGPGLEEAEEEGERDMGLYG) is disordered. The segment covering 341 to 350 (GLEEAEEEGE) has biased composition (acidic residues).

Belongs to the protein kinase superfamily. CAMK Ser/Thr protein kinase family. Tribbles subfamily. As to quaternary structure, interacts with AKT1, AKT2, MAP2K1 and MAP2K7. Interacts with ATF4. Interacts with DDIT3/CHOP and inhibits its interaction with EP300/P300. Interacts with APOBEC3C. Interacts (via N-terminus) with APOBEC3A. Interacts with RELA.

The protein localises to the nucleus. In terms of biological role, inactive protein kinase which acts as a regulator of the integrated stress response (ISR), a process for adaptation to various stress. Inhibits the transcriptional activity of DDIT3/CHOP and is involved in DDIT3/CHOP-dependent cell death during ER stress. May play a role in programmed neuronal cell death but does not appear to affect non-neuronal cells. Acts as a negative feedback regulator of the ATF4-dependent transcription during the ISR: while TRIB3 expression is promoted by ATF4, TRIB3 protein interacts with ATF4 and inhibits ATF4 transcription activity. Disrupts insulin signaling by binding directly to Akt kinases and blocking their activation. May bind directly to and mask the 'Thr-308' phosphorylation site in AKT1. Interacts with the NF-kappa-B transactivator p65 RELA and inhibits its phosphorylation and thus its transcriptional activation activity. Interacts with MAPK kinases and regulates activation of MAP kinases. Can inhibit APOBEC3A editing of nuclear DNA. In Bos taurus (Bovine), this protein is Tribbles homolog 3 (TRIB3).